Consider the following 332-residue polypeptide: RNA polymerase principal sigma factor HrdD (332 aa).

The segment at 1–21 (MATRAVARRQPAASGETGAAG) is disordered. A Polymerase core binding motif is present at residues 124–137 (DLIQEGNAGLVRAV). The H-T-H motif DNA-binding region spans 294-313 (LTEVGKQHGLTRERIRQIEK).

It belongs to the sigma-70 factor family.

In terms of biological role, sigma factors are initiation factors that promote the attachment of RNA polymerase to specific initiation sites and are then released. The protein is RNA polymerase principal sigma factor HrdD (hrdD) of Streptomyces griseus.